Reading from the N-terminus, the 178-residue chain is ATP synthase subunit delta (178 aa).

Belongs to the ATPase delta chain family. F-type ATPases have 2 components, F(1) - the catalytic core - and F(0) - the membrane proton channel. F(1) has five subunits: alpha(3), beta(3), gamma(1), delta(1), epsilon(1). F(0) has three main subunits: a(1), b(2) and c(10-14). The alpha and beta chains form an alternating ring which encloses part of the gamma chain. F(1) is attached to F(0) by a central stalk formed by the gamma and epsilon chains, while a peripheral stalk is formed by the delta and b chains.

It is found in the cell membrane. Functionally, f(1)F(0) ATP synthase produces ATP from ADP in the presence of a proton or sodium gradient. F-type ATPases consist of two structural domains, F(1) containing the extramembraneous catalytic core and F(0) containing the membrane proton channel, linked together by a central stalk and a peripheral stalk. During catalysis, ATP synthesis in the catalytic domain of F(1) is coupled via a rotary mechanism of the central stalk subunits to proton translocation. Its function is as follows. This protein is part of the stalk that links CF(0) to CF(1). It either transmits conformational changes from CF(0) to CF(1) or is implicated in proton conduction. This is ATP synthase subunit delta from Geobacillus sp. (strain WCH70).